The chain runs to 269 residues: D-aminoacyl-tRNA deacylase (269 aa).

It belongs to the DtdA deacylase family. Monomer. Requires Zn(2+) as cofactor.

The catalysed reaction is a D-aminoacyl-tRNA + H2O = a tRNA + a D-alpha-amino acid + H(+). It catalyses the reaction glycyl-tRNA(Ala) + H2O = tRNA(Ala) + glycine + H(+). D-aminoacyl-tRNA deacylase with broad substrate specificity. By recycling D-aminoacyl-tRNA to D-amino acids and free tRNA molecules, this enzyme counteracts the toxicity associated with the formation of D-aminoacyl-tRNA entities in vivo. This Caldivirga maquilingensis (strain ATCC 700844 / DSM 13496 / JCM 10307 / IC-167) protein is D-aminoacyl-tRNA deacylase.